Reading from the N-terminus, the 104-residue chain is Phosphoribosyl-ATP pyrophosphatase (104 aa).

This sequence belongs to the PRA-PH family.

It is found in the cytoplasm. The enzyme catalyses 1-(5-phospho-beta-D-ribosyl)-ATP + H2O = 1-(5-phospho-beta-D-ribosyl)-5'-AMP + diphosphate + H(+). It functions in the pathway amino-acid biosynthesis; L-histidine biosynthesis; L-histidine from 5-phospho-alpha-D-ribose 1-diphosphate: step 2/9. The chain is Phosphoribosyl-ATP pyrophosphatase from Streptococcus gordonii (strain Challis / ATCC 35105 / BCRC 15272 / CH1 / DL1 / V288).